Here is a 115-residue protein sequence, read N- to C-terminus: Large ribosomal subunit protein bL19 (115 aa).

The protein belongs to the bacterial ribosomal protein bL19 family.

In terms of biological role, this protein is located at the 30S-50S ribosomal subunit interface and may play a role in the structure and function of the aminoacyl-tRNA binding site. This chain is Large ribosomal subunit protein bL19, found in Streptococcus thermophilus (strain CNRZ 1066).